A 227-amino-acid polypeptide reads, in one-letter code: Eukaryotic translation initiation factor 4E-1 (227 aa).

The tract at residues 1 to 52 (MAEEHETRPPSAGRPPSSGRGRADDADEREEGEIADDDSGHAPPQANPAAPH) is disordered. The span at 9–20 (PPSAGRPPSSGR) shows a compositional bias: low complexity. The span at 25-37 (DADEREEGEIADD) shows a compositional bias: acidic residues. 2 EIF4G-binding regions span residues 52 to 55 (HPLE) and 62 to 98 (FDNP…NNIH). Residues 70–75 (KQATWG), Lys-102, and 120–121 (WE) each bind mRNA. A disulfide bridge links Cys-125 with Cys-163. An EIF4G-binding region spans residues 146–155 (HTLLAMIGEQ). MRNA contacts are provided by residues 170 to 175 (RGKQER) and 215 to 219 (KKMDK).

It belongs to the eukaryotic initiation factor 4E family. EIF4F is a multi-subunit complex, the composition of which varies with external and internal environmental conditions. It is composed of at least EIF4A, EIF4E and EIF4G. EIF4E is also known to interact with other partners. In higher plants two isoforms of EIF4F have been identified, named isoform EIF4F and isoform EIF(iso)4F. Isoform EIF4F has subunits p220 and p26, whereas isoform EIF(iso)4F has subunits p82 and p28. According to the redox status, the Cys-125-Cys-163 disulfide bridge may have a role in regulating protein function by affecting its ability to bind capped mRNA.

The protein resides in the nucleus. It is found in the cytoplasm. Component of the protein complex eIF4F, which is involved in the recognition of the mRNA cap, ATP-dependent unwinding of 5'-terminal secondary structure and recruitment of mRNA to the ribosome. Recognizes and binds the 7-methylguanosine-containing mRNA cap during an early step in the initiation of protein synthesis and facilitates ribosome binding by inducing the unwinding of the mRNAs secondary structures. In Oryza sativa subsp. japonica (Rice), this protein is Eukaryotic translation initiation factor 4E-1.